A 324-amino-acid polypeptide reads, in one-letter code: Spheroidene monooxygenase (324 aa).

Positions 226–324 (GKDPVGEALT…PGKGGRKENA (99 aa)) are disordered. Low complexity-rich tracts occupy residues 248-278 (PAAAQPAPAAEAPKPAPAPVAEKPALAVEMP) and 287-313 (VVEAPKPASAPVASKPMPQGGKPNFKG).

It belongs to the CrtA family. Heme serves as cofactor.

It catalyses the reaction spheroidene + 4 reduced [2Fe-2S]-[ferredoxin] + 2 O2 + 4 H(+) = spheroiden-2-one + 4 oxidized [2Fe-2S]-[ferredoxin] + 3 H2O. The catalysed reaction is spheroidene + 2 reduced [2Fe-2S]-[ferredoxin] + O2 + 2 H(+) = 2-hydroxyspheroidene + 2 oxidized [2Fe-2S]-[ferredoxin] + H2O. The enzyme catalyses 2-hydroxyspheroidene + 2 reduced [2Fe-2S]-[ferredoxin] + O2 + 2 H(+) = 2,2-dihydroxyspheroidene + 2 oxidized [2Fe-2S]-[ferredoxin] + H2O. It carries out the reaction 2,2-dihydroxyspheroidene = spheroiden-2-one + H2O. It functions in the pathway carotenoid biosynthesis; spheroidene biosynthesis. In terms of biological role, involved in the biosynthesis of the carotenoid spheroidene. Catalyzes the introduction of one keto group at the C-2 position of spheroidene. In vitro, can use nonnative substrates and produce oxocarotenoids with a hydroxy and/or a keto group, derived from neurosporene, lycopene, 3,4-didehydrolycopene or 3,4,3',4'-tetradehydrolycopene. The polypeptide is Spheroidene monooxygenase (Cereibacter sphaeroides (strain ATCC 17023 / DSM 158 / JCM 6121 / CCUG 31486 / LMG 2827 / NBRC 12203 / NCIMB 8253 / ATH 2.4.1.) (Rhodobacter sphaeroides)).